A 332-amino-acid polypeptide reads, in one-letter code: Holliday junction branch migration complex subunit RuvB (332 aa).

The tract at residues 1–181 (MSRILDNEQM…FGITGHMEYY (181 aa)) is large ATPase domain (RuvB-L). Residues leucine 20, arginine 21, glycine 62, lysine 65, threonine 66, threonine 67, 128-130 (EDF), arginine 171, tyrosine 181, and arginine 218 each bind ATP. A Mg(2+)-binding site is contributed by threonine 66. The small ATPAse domain (RuvB-S) stretch occupies residues 182-252 (EEADLTEIVE…ITDQALSMLD (71 aa)). A head domain (RuvB-H) region spans residues 255–332 (HEGLDYVDQK…EHLGYEYMEK (78 aa)). Arginine 291, arginine 310, arginine 312, and arginine 315 together coordinate DNA.

The protein belongs to the RuvB family. In terms of assembly, homohexamer. Forms an RuvA(8)-RuvB(12)-Holliday junction (HJ) complex. HJ DNA is sandwiched between 2 RuvA tetramers; dsDNA enters through RuvA and exits via RuvB. An RuvB hexamer assembles on each DNA strand where it exits the tetramer. Each RuvB hexamer is contacted by two RuvA subunits (via domain III) on 2 adjacent RuvB subunits; this complex drives branch migration. In the full resolvosome a probable DNA-RuvA(4)-RuvB(12)-RuvC(2) complex forms which resolves the HJ.

Its subcellular location is the cytoplasm. The catalysed reaction is ATP + H2O = ADP + phosphate + H(+). Its function is as follows. The RuvA-RuvB-RuvC complex processes Holliday junction (HJ) DNA during genetic recombination and DNA repair, while the RuvA-RuvB complex plays an important role in the rescue of blocked DNA replication forks via replication fork reversal (RFR). RuvA specifically binds to HJ cruciform DNA, conferring on it an open structure. The RuvB hexamer acts as an ATP-dependent pump, pulling dsDNA into and through the RuvAB complex. RuvB forms 2 homohexamers on either side of HJ DNA bound by 1 or 2 RuvA tetramers; 4 subunits per hexamer contact DNA at a time. Coordinated motions by a converter formed by DNA-disengaged RuvB subunits stimulates ATP hydrolysis and nucleotide exchange. Immobilization of the converter enables RuvB to convert the ATP-contained energy into a lever motion, pulling 2 nucleotides of DNA out of the RuvA tetramer per ATP hydrolyzed, thus driving DNA branch migration. The RuvB motors rotate together with the DNA substrate, which together with the progressing nucleotide cycle form the mechanistic basis for DNA recombination by continuous HJ branch migration. Branch migration allows RuvC to scan DNA until it finds its consensus sequence, where it cleaves and resolves cruciform DNA. In Streptococcus gordonii (strain Challis / ATCC 35105 / BCRC 15272 / CH1 / DL1 / V288), this protein is Holliday junction branch migration complex subunit RuvB.